The chain runs to 350 residues: LysM domain-containing GPI-anchored protein 2 (350 aa).

A signal peptide spans 1-23; that stretch reads METSCFTLLGLLVSLSFFLTLSA. 4 N-linked (GlcNAc...) asparagine glycosylation sites follow: Asn30, Asn48, Asn76, and Asn99. Cystine bridges form between Cys31/Cys97, Cys38/Cys161, Cys95/Cys159, and Cys97/Cys161. LysM domains are found at residues 108–155 and 172–216; these read IEYT…KFWI and YAHV…PLDV. Chitin is bound by residues 114 to 120 and 142 to 149; these read KDDILSF and PDPNKIEI. Asn193, Asn238, Asn258, Asn289, and Asn305 each carry an N-linked (GlcNAc...) asparagine glycan. 2 cysteine pairs are disulfide-bonded: Cys221–Cys253 and Cys248–Cys277. The GPI-anchor amidated aspartate moiety is linked to residue Asp318. Residues 319-350 constitute a propeptide, removed in mature form; that stretch reads SAGPDNYASTLSSSFNFVIVLIQCALLCLCLL.

As to quaternary structure, forms homooligomers. Interacts with CERK1. Binds to chitin oligosaccharide elicitor.

The protein localises to the cell membrane. Its function is as follows. Chitin elicitor-binding protein involved in the perception of chitin oligosaccharide elicitor. The sequence is that of LysM domain-containing GPI-anchored protein 2 (LYM2) from Arabidopsis thaliana (Mouse-ear cress).